The chain runs to 122 residues: uncharacterized protein (122 aa).

The first 28 residues, 1 to 28 (MVPGPPESVVRFFLWFCFLLPPTRKASC), serve as a signal peptide directing secretion. Residue asparagine 49 is glycosylated (N-linked (GlcNAc...) asparagine).

It localises to the secreted. This is an uncharacterized protein from Homo sapiens (Human).